A 73-amino-acid polypeptide reads, in one-letter code: MKRLIPVALLTALLAGCAHDSPCVPVYDDQGRLVHTNTCMKGTTQDNWETAGAIAGGAAAVAGLTMGIIALSK.

2 consecutive transmembrane segments (helical) span residues 4–24 (LIPVALLTALLAGCAHDSPCV) and 51–71 (AGAIAGGAAAVAGLTMGIIAL).

It is found in the cell membrane. This is an uncharacterized protein from Escherichia coli O157:H7.